Consider the following 90-residue polypeptide: Large ribosomal subunit protein bL27 (90 aa).

The protein belongs to the bacterial ribosomal protein bL27 family.

This is Large ribosomal subunit protein bL27 from Paracoccus denitrificans (strain Pd 1222).